A 244-amino-acid chain; its full sequence is MKIDLNADLGEGCVSDVELLTLVSSANIACGFHAGDAQTMQACVREAIKNGVAIGAHPSYPDRENFGRSAMQLPPETVFAQTLYQIGALAAIARAQGGVMCHVKPHGMLYNQAAKEAQLADAIARAVYACDPALILVGLAGSELIRAGERYGLVTREEVFADRGYQADGSLVPRSQPGALIENEEQALAQTLEMVQHGRVKSITGEWATVTAQTVCLHGDGEHALAFARRLRATFAEKGIVVAA.

Belongs to the LamB/PxpA family. Forms a complex composed of PxpA, PxpB and PxpC.

The catalysed reaction is 5-oxo-L-proline + ATP + 2 H2O = L-glutamate + ADP + phosphate + H(+). Its function is as follows. Catalyzes the cleavage of 5-oxoproline to form L-glutamate coupled to the hydrolysis of ATP to ADP and inorganic phosphate. In Escherichia coli O7:K1 (strain IAI39 / ExPEC), this protein is 5-oxoprolinase subunit A.